The chain runs to 161 residues: Anaerobic nitrite reductase Glb1-1 (161 aa).

The Globin domain occupies cysteine 8–lysine 157. The short motif at glutamate 41–serine 45 is the Homodimerization element. Residues serine 51, lysine 65, histidine 69, lysine 99, threonine 103, and histidine 104 each contribute to the heme b site. Residues asparagine 111–aspartate 123 carry the Homodimerization motif.

Belongs to the plant globin family. As to quaternary structure, homodimer. Heme b serves as cofactor. In terms of tissue distribution, mainly expressed in root nodules, and, to a lower extent, in leaves, roots, stems, flowers and fruits. Accumulates in mature root nodules.

It carries out the reaction Fe(III)-heme b-[protein] + nitric oxide + H2O = Fe(II)-heme b-[protein] + nitrite + 2 H(+). Functionally, phytoglobin that reduces nitrite to nitric oxide (NO) under anoxic conditions (e.g. during flooding or in waterlogged soil) and upon root nodulation. Required for general plant development and during nodulation, especially for the onset of symbiosis. Monitors nitric oxide (NO) levels during early phase of the nitrogen-fixing symbiosis and buffers oxygen in functioning nodules. May not function as an oxygen storage or transport protein. Has an unusually high affinity for O(2) through a hexacoordinate heme iron because of a very low dissociation constant. This is Anaerobic nitrite reductase Glb1-1 from Lotus japonicus (Lotus corniculatus var. japonicus).